Consider the following 212-residue polypeptide: Eggshell protein 1 (212 aa).

The signal sequence occupies residues 1–27; sequence MKSSLTLLFLAAIGYTIAYPPPSDYDS. Positions 155–212 are disordered; that stretch reads RKNGHGKGGKGGNGGGGGKGGGKGGGNGKGNGKGGGGKNGGGKGGNGGKGGSYAPSYY. Over residues 163–205 the composition is skewed to gly residues; the sequence is GKGGNGGGGGKGGGKGGGNGKGNGKGGGGKNGGGKGGNGGKGG.

As to expression, detected only in mature female parasites.

The sequence is that of Eggshell protein 1 (ESG-1) from Schistosoma japonicum (Blood fluke).